A 1364-amino-acid polypeptide reads, in one-letter code: Trifunctional purine biosynthetic protein adenosine-3 (1364 aa).

An ATP-grasp domain is found at 114–321 (KDFMLRHGIP…LFEVMQACCS (208 aa)). 140–202 (IRSAPYQALV…EELLEGEEIS (63 aa)) is an ATP binding site. The Mn(2+) site is built by E291 and N293. Residues 435–1154 (AIATAPGLSY…ARTQRMLSQP (720 aa)) are AIRS. Residues 1155–1364 (RKRVAVLISG…EAPKDIKDSQ (210 aa)) form a GART region. Residue 1166–1168 (GSN) coordinates N(1)-(5-phospho-beta-D-ribosyl)glycinamide. (6R)-10-formyltetrahydrofolate contacts are provided by residues R1221, 1246 to 1249 (MRIL), and N1263. H1265 serves as the catalytic Proton donor. Residue 1297–1301 (DEGVD) participates in (6R)-10-formyltetrahydrofolate binding. 1327–1330 (HYAE) contacts N(1)-(5-phospho-beta-D-ribosyl)glycinamide.

In the N-terminal section; belongs to the GARS family. This sequence in the central section; belongs to the AIR synthase family. It in the C-terminal section; belongs to the GART family.

The enzyme catalyses 5-phospho-beta-D-ribosylamine + glycine + ATP = N(1)-(5-phospho-beta-D-ribosyl)glycinamide + ADP + phosphate + H(+). It catalyses the reaction 2-formamido-N(1)-(5-O-phospho-beta-D-ribosyl)acetamidine + ATP = 5-amino-1-(5-phospho-beta-D-ribosyl)imidazole + ADP + phosphate + H(+). It carries out the reaction N(1)-(5-phospho-beta-D-ribosyl)glycinamide + (6R)-10-formyltetrahydrofolate = N(2)-formyl-N(1)-(5-phospho-beta-D-ribosyl)glycinamide + (6S)-5,6,7,8-tetrahydrofolate + H(+). It participates in purine metabolism; IMP biosynthesis via de novo pathway; 5-amino-1-(5-phospho-D-ribosyl)imidazole from N(2)-formyl-N(1)-(5-phospho-D-ribosyl)glycinamide: step 2/2. The protein operates within purine metabolism; IMP biosynthesis via de novo pathway; N(1)-(5-phospho-D-ribosyl)glycinamide from 5-phospho-alpha-D-ribose 1-diphosphate: step 2/2. Its pathway is purine metabolism; IMP biosynthesis via de novo pathway; N(2)-formyl-N(1)-(5-phospho-D-ribosyl)glycinamide from N(1)-(5-phospho-D-ribosyl)glycinamide (10-formyl THF route): step 1/1. Trifunctional enzyme required for de novo purine biosynthesis. This is Trifunctional purine biosynthetic protein adenosine-3 (ade3) from Drosophila pseudoobscura pseudoobscura (Fruit fly).